Here is a 336-residue protein sequence, read N- to C-terminus: Tetraacyldisaccharide 4'-kinase (336 aa).

58-65 (AVGGSGKT) contacts ATP.

The protein belongs to the LpxK family.

The enzyme catalyses a lipid A disaccharide + ATP = a lipid IVA + ADP + H(+). Its pathway is glycolipid biosynthesis; lipid IV(A) biosynthesis; lipid IV(A) from (3R)-3-hydroxytetradecanoyl-[acyl-carrier-protein] and UDP-N-acetyl-alpha-D-glucosamine: step 6/6. Transfers the gamma-phosphate of ATP to the 4'-position of a tetraacyldisaccharide 1-phosphate intermediate (termed DS-1-P) to form tetraacyldisaccharide 1,4'-bis-phosphate (lipid IVA). This Aromatoleum aromaticum (strain DSM 19018 / LMG 30748 / EbN1) (Azoarcus sp. (strain EbN1)) protein is Tetraacyldisaccharide 4'-kinase.